The primary structure comprises 452 residues: Chloride/fluoride channel protein (452 aa).

Transmembrane regions (helical) follow at residues 23-43 (WLAL…LFLL), 57-77 (WVIW…HLIG), 97-117 (IVPL…HLFG), 160-180 (FASV…VLAI), 188-208 (LFPC…WGVV), 222-242 (LWSV…GLLF), 264-284 (PFAG…NHYI), 315-337 (VFTV…FYIG), 344-364 (LAPL…VAVF), and 386-408 (IAPL…GIYH).

Belongs to the chloride channel (TC 2.A.49) family.

It localises to the cell membrane. Its function is as follows. Transports chloride and fluoride with similar efficiency. The polypeptide is Chloride/fluoride channel protein (eriC) (Pseudomonas syringae pv. tomato (strain ATCC BAA-871 / DC3000)).